The following is a 413-amino-acid chain: Glucose-1-phosphate adenylyltransferase (413 aa).

Residues Tyr-102, Gly-167, 182-183 (EK), and Ser-200 each bind alpha-D-glucose 1-phosphate.

It belongs to the bacterial/plant glucose-1-phosphate adenylyltransferase family. In terms of assembly, homotetramer.

It catalyses the reaction alpha-D-glucose 1-phosphate + ATP + H(+) = ADP-alpha-D-glucose + diphosphate. It participates in glycan biosynthesis; glycogen biosynthesis. Its function is as follows. Involved in the biosynthesis of ADP-glucose, a building block required for the elongation reactions to produce glycogen. Catalyzes the reaction between ATP and alpha-D-glucose 1-phosphate (G1P) to produce pyrophosphate and ADP-Glc. In Deinococcus geothermalis (strain DSM 11300 / CIP 105573 / AG-3a), this protein is Glucose-1-phosphate adenylyltransferase.